Reading from the N-terminus, the 146-residue chain is Large ribosomal subunit protein uL13 (146 aa).

The protein belongs to the universal ribosomal protein uL13 family. As to quaternary structure, part of the 50S ribosomal subunit.

Its function is as follows. This protein is one of the early assembly proteins of the 50S ribosomal subunit, although it is not seen to bind rRNA by itself. It is important during the early stages of 50S assembly. The polypeptide is Large ribosomal subunit protein uL13 (Sulfurisphaera tokodaii (strain DSM 16993 / JCM 10545 / NBRC 100140 / 7) (Sulfolobus tokodaii)).